The following is an 805-amino-acid chain: Kinesin-like protein Klp10A (805 aa).

The globular stretch occupies residues 1–274 (MDMITVGQSV…FVPLLDGQAV (274 aa)). 2 disordered regions span residues 68–94 (QHAA…SAIG) and 117–211 (IPNP…RRSH). A compositionally biased stretch (polar residues) spans 80 to 94 (APMNLSRNPTQSAIG). A compositionally biased stretch (low complexity) spans 123 to 136 (SSNSVNTNSNSNTT). The residue at position 157 (Ser-157) is a Phosphoserine. A compositionally biased stretch (polar residues) spans 158-179 (QAATGQQQTRIASAVPNNTLPN). The span at 180–200 (PSAAASAGPAAQGVATAATTQ) shows a compositional bias: low complexity. Residues 205 to 244 (ASTRRSHALKEVERLKENREKRRARQAEMKEEKVALMNQD) are a coiled coil. In terms of domain architecture, Kinesin motor spans 278 to 610 (QITVCVRKRP…LRYADRVKEL (333 aa)). ATP is bound at residue 368–375 (GQTGSGKT). Thr-630 is modified (phosphothreonine). The tract at residues 633–688 (EEEEELNMVHPHSHQLHPNSHAPASQSNNQRAPASHHSGAVIHNNNNNNNKNGNAG) is disordered. Residues 648 to 664 (LHPNSHAPASQSNNQRA) are compositionally biased toward polar residues. Low complexity predominate over residues 676–688 (NNNNNNNKNGNAG). Phosphoserine is present on residues Ser-795, Ser-797, and Ser-800.

The protein belongs to the TRAFAC class myosin-kinesin ATPase superfamily. Kinesin family. MCAK/KIF2 subfamily. In terms of assembly, interacts with Alms1a (via C-terminus). Expressed in male germline stem cells and spermatogonia (at protein level).

The protein localises to the cytoplasm. It is found in the cytoskeleton. The protein resides in the microtubule organizing center. It localises to the centrosome. Its subcellular location is the spindle pole. The protein localises to the chromosome. It is found in the centromere. Required during anaphase to drive sister chromatid separation to promote flux by actively depolymerizing kinetochore microtubules at their pole-associated minus ends, thereby moving chromatids through a 'poleward flux'. Involved in asymmetric cell division of sensory organ precursor (SOP) cells by playing a role in the asymmetric localization of Sara-expressing endosomes to the pIIa daughter cell but not to the pIIb cell. Klp98A targets Sara-expressing endosomes to the central spindle which is symmetrically arranged in early cell division. During late cytokinesis, central spindle asymmetry is generated by enrichment of Patronin on the pIIb side which protects microtubules from depolymerization by Klp10A while unprotected microtubules on the pIIa side are disassembled by Klp10A, leading to the asymmetric delivery of Sara-expressing endosomes to the pIIa daughter cell. The sequence is that of Kinesin-like protein Klp10A from Drosophila melanogaster (Fruit fly).